Consider the following 472-residue polypeptide: Phosphoenolpyruvate carboxykinase (ATP), glycosomal (472 aa).

221 to 228 (GLSGTGKT) lines the ATP pocket.

This sequence belongs to the phosphoenolpyruvate carboxykinase (ATP) family. In terms of assembly, homodimer.

Its subcellular location is the glycosome. It carries out the reaction oxaloacetate + ATP = phosphoenolpyruvate + ADP + CO2. It functions in the pathway carbohydrate biosynthesis; gluconeogenesis. The polypeptide is Phosphoenolpyruvate carboxykinase (ATP), glycosomal (PEPCK) (Trypanosoma cruzi).